The following is a 423-amino-acid chain: Serine hydroxymethyltransferase (423 aa).

Residues Leu121 and 125 to 127 each bind (6S)-5,6,7,8-tetrahydrofolate; that span reads GHL. Lys230 bears the N6-(pyridoxal phosphate)lysine mark. 355–357 serves as a coordination point for (6S)-5,6,7,8-tetrahydrofolate; it reads SPF.

The protein belongs to the SHMT family. As to quaternary structure, homodimer. Requires pyridoxal 5'-phosphate as cofactor.

It is found in the cytoplasm. It catalyses the reaction (6R)-5,10-methylene-5,6,7,8-tetrahydrofolate + glycine + H2O = (6S)-5,6,7,8-tetrahydrofolate + L-serine. The protein operates within one-carbon metabolism; tetrahydrofolate interconversion. It participates in amino-acid biosynthesis; glycine biosynthesis; glycine from L-serine: step 1/1. Its function is as follows. Catalyzes the reversible interconversion of serine and glycine with tetrahydrofolate (THF) serving as the one-carbon carrier. This reaction serves as the major source of one-carbon groups required for the biosynthesis of purines, thymidylate, methionine, and other important biomolecules. Also exhibits THF-independent aldolase activity toward beta-hydroxyamino acids, producing glycine and aldehydes, via a retro-aldol mechanism. This Hydrogenovibrio crunogenus (strain DSM 25203 / XCL-2) (Thiomicrospira crunogena) protein is Serine hydroxymethyltransferase.